The chain runs to 144 residues: UPF0102 protein sce2912 (144 aa).

This sequence belongs to the UPF0102 family.

In Sorangium cellulosum (strain So ce56) (Polyangium cellulosum (strain So ce56)), this protein is UPF0102 protein sce2912.